The following is a 502-amino-acid chain: Protein O-glucosyltransferase 2 (502 aa).

A signal peptide spans 1–19 (MFGTLLLYCFFLATVPALA). The stretch at 24 to 130 (ERQLSPEKSE…VAKSPYILKG (107 aa)) is one Filamin repeat. N-linked (GlcNAc...) asparagine glycosylation is found at N302 and N414. The Prevents secretion from ER motif lies at 499 to 502 (KDEL).

It belongs to the KDELC family. In terms of processing, N-glycosylated.

The protein resides in the endoplasmic reticulum lumen. The catalysed reaction is L-seryl-[EGF-like domain protein] + UDP-alpha-D-glucose = 3-O-(beta-D-glucosyl)-L-seryl-[EGF-like domain protein] + UDP + H(+). The enzyme catalyses L-seryl-[EGF-like domain protein] + UDP-alpha-D-xylose = 3-O-(beta-D-xylosyl)-L-seryl-[EGF-like domain protein] + UDP + H(+). Its pathway is protein modification; protein glycosylation. Protein glucosyltransferase that catalyzes the transfer of glucose from UDP-glucose to a serine residue within the consensus sequence peptide C-X-N-T-X-G-S-F-X-C. Can also catalyze the transfer of xylose from UDP-xylose but less efficiently. Specifically targets extracellular EGF repeats of proteins such as NOTCH1, NOTCH3, FBN1, FBN2 and LTBP1. May regulate the transport of NOTCH1 and NOTCH3 to the plasma membrane and thereby the Notch signaling pathway. The sequence is that of Protein O-glucosyltransferase 2 from Homo sapiens (Human).